A 313-amino-acid chain; its full sequence is Ribosomal RNA small subunit methyltransferase H (313 aa).

Residues 34 to 36 (GGH), Asp54, Phe81, Asp102, and Gln109 each bind S-adenosyl-L-methionine. The segment at 289 to 313 (IAGPEETDRNPRARSAKLRAAEKLG) is disordered.

Belongs to the methyltransferase superfamily. RsmH family.

It is found in the cytoplasm. It catalyses the reaction cytidine(1402) in 16S rRNA + S-adenosyl-L-methionine = N(4)-methylcytidine(1402) in 16S rRNA + S-adenosyl-L-homocysteine + H(+). Specifically methylates the N4 position of cytidine in position 1402 (C1402) of 16S rRNA. The protein is Ribosomal RNA small subunit methyltransferase H of Trichlorobacter lovleyi (strain ATCC BAA-1151 / DSM 17278 / SZ) (Geobacter lovleyi).